The sequence spans 174 residues: Crossover junction endodeoxyribonuclease RuvC (174 aa).

Catalysis depends on residues aspartate 8, glutamate 67, and aspartate 139. Positions 8, 67, and 139 each coordinate Mg(2+).

This sequence belongs to the RuvC family. As to quaternary structure, homodimer which binds Holliday junction (HJ) DNA. The HJ becomes 2-fold symmetrical on binding to RuvC with unstacked arms; it has a different conformation from HJ DNA in complex with RuvA. In the full resolvosome a probable DNA-RuvA(4)-RuvB(12)-RuvC(2) complex forms which resolves the HJ. Mg(2+) is required as a cofactor.

It localises to the cytoplasm. It catalyses the reaction Endonucleolytic cleavage at a junction such as a reciprocal single-stranded crossover between two homologous DNA duplexes (Holliday junction).. Functionally, the RuvA-RuvB-RuvC complex processes Holliday junction (HJ) DNA during genetic recombination and DNA repair. Endonuclease that resolves HJ intermediates. Cleaves cruciform DNA by making single-stranded nicks across the HJ at symmetrical positions within the homologous arms, yielding a 5'-phosphate and a 3'-hydroxyl group; requires a central core of homology in the junction. The consensus cleavage sequence is 5'-(A/T)TT(C/G)-3'. Cleavage occurs on the 3'-side of the TT dinucleotide at the point of strand exchange. HJ branch migration catalyzed by RuvA-RuvB allows RuvC to scan DNA until it finds its consensus sequence, where it cleaves and resolves the cruciform DNA. This is Crossover junction endodeoxyribonuclease RuvC from Pseudomonas fluorescens (strain ATCC BAA-477 / NRRL B-23932 / Pf-5).